A 247-amino-acid chain; its full sequence is Putative urease accessory protein UreD homolog (247 aa).

It belongs to the UreD family. UreD, UreF and UreG form a complex that acts as a GTP-hydrolysis-dependent molecular chaperone, activating the urease apoprotein by helping to assemble the nickel containing metallocenter of UreC. The UreE protein probably delivers the nickel.

It localises to the cytoplasm. Required for maturation of urease via the functional incorporation of the urease nickel metallocenter. This is Putative urease accessory protein UreD homolog from Escherichia coli O157:H7.